The primary structure comprises 452 residues: Tubulin alpha-6 chain (452 aa).

GTP contacts are provided by Gln11, Glu69, Ser138, Gly142, Thr143, Thr177, Asn204, and Asn226. Glu69 is a binding site for Mg(2+). Glu252 is a catalytic residue.

This sequence belongs to the tubulin family. As to quaternary structure, dimer of alpha and beta chains. A typical microtubule is a hollow water-filled tube with an outer diameter of 25 nm and an inner diameter of 15 nM. Alpha-beta heterodimers associate head-to-tail to form protofilaments running lengthwise along the microtubule wall with the beta-tubulin subunit facing the microtubule plus end conferring a structural polarity. Microtubules usually have 13 protofilaments but different protofilament numbers can be found in some organisms and specialized cells. Requires Mg(2+) as cofactor.

The protein localises to the cytoplasm. The protein resides in the cytoskeleton. It localises to the spindle. The enzyme catalyses GTP + H2O = GDP + phosphate + H(+). Tubulin is the major constituent of microtubules, a cylinder consisting of laterally associated linear protofilaments composed of alpha- and beta-tubulin heterodimers. Microtubules grow by the addition of GTP-tubulin dimers to the microtubule end, where a stabilizing cap forms. Below the cap, tubulin dimers are in GDP-bound state, owing to GTPase activity of alpha-tubulin. The polypeptide is Tubulin alpha-6 chain (TUBA6) (Naegleria pringsheimi (Amoeba)).